Here is a 377-residue protein sequence, read N- to C-terminus: Probable G-protein coupled receptor F27E5.8 (377 aa).

The Extracellular portion of the chain corresponds to 1-34 (MSEQDSSSPKYMRFLLGNFTSAEMVTDGNFLIYC). Asn-18 is a glycosylation site (N-linked (GlcNAc...) asparagine). A helical transmembrane segment spans residues 35–55 (IEMGLLVIGVLENIFMIGAVF). Topologically, residues 56–71 (STSCLHLNLRILICNC) are cytoplasmic. Residues 72 to 92 (CLGFILMAVGRAMIAVPLCIA) form a helical membrane-spanning segment. Over 93 to 105 (HLRDVDISSHAWC) the chain is Extracellular. A helical membrane pass occupies residues 106–126 (FIANAVHHSSADSVCLSFVFI). At 127 to 144 (MLERTAGTIWSKDYEKTK) the chain is on the cytoplasmic side. A helical membrane pass occupies residues 145–165 (IHIFPCIFAFLQWFIPMFMIL). Residues 166-195 (GNFLDRANRMEHFLLYPHLPCQIEYLTPTM) are Extracellular-facing. Residues 196–216 (FMITIFIIVIGFIASVGGITI) form a helical membrane-spanning segment. Residues 217-251 (VYNKNIKKYNTRDIWFNTVNLSERYQITENIRSTH) are Cytoplasmic-facing. The helical transmembrane segment at 252-272 (LLFPLLALMLIFSTLSVSVLI) threads the bilayer. The Extracellular portion of the chain corresponds to 273-303 (YGGYWVSVMTKEPARFEEVVKWFGRGGEAAQ). A helical transmembrane segment spans residues 304 to 324 (LFDIITAIYTISFPICAFICH). Residues 325-377 (PNLFRFLRKFIGWNSYAVRPSNLNEIGGFEMSTAPIRTQTEFHFQELSRQWNT) lie on the Cytoplasmic side of the membrane.

This sequence belongs to the G-protein coupled receptor 1 family.

The protein resides in the cell membrane. In Caenorhabditis elegans, this protein is Probable G-protein coupled receptor F27E5.8.